The following is a 60-amino-acid chain: Large ribosomal subunit protein uL30 (60 aa).

The protein belongs to the universal ribosomal protein uL30 family. As to quaternary structure, part of the 50S ribosomal subunit.

The protein is Large ribosomal subunit protein uL30 of Paracidovorax citrulli (strain AAC00-1) (Acidovorax citrulli).